Reading from the N-terminus, the 163-residue chain is Probable ribosome biogenesis protein RLP24 (163 aa).

It belongs to the eukaryotic ribosomal protein eL24 family. Associated with nucleolar and cytoplasmic pre-60S particles. At the end of biogenesis it dissociates from cytoplasmic pre-60S particles and is likely to be exchanged for its ribosomal homolog, RPL24.

It localises to the nucleus. It is found in the nucleolus. In terms of biological role, involved in the biogenesis of the 60S ribosomal subunit. Ensures the docking of GTPBP4/NOG1 to pre-60S particles. This chain is Probable ribosome biogenesis protein RLP24 (Rsl24d1), found in Mus musculus (Mouse).